We begin with the raw amino-acid sequence, 855 residues long: Inactive rhomboid protein 1 (855 aa).

The disordered stretch occupies residues 1–36 (MSEARRDSTSSLQRKKPPWLKLDIPSAAPPAAEEPS). At 1 to 411 (MSEARRDSTS…HRPFFTYWLT (411 aa)) the chain is on the cytoplasmic side. Residues 25–36 (PSAAPPAAEEPS) are compositionally biased toward low complexity. Residues S76 and S176 each carry the phosphoserine modification. Residues T180 and T183 each carry the phosphothreonine modification. S390 carries the phosphoserine modification. Residues 412 to 432 (FVHSLVTVLAVCIYGIAPVGF) form a helical membrane-spanning segment. Over 433–655 (SQHETVDSVL…NPEVPDQFYR (223 aa)) the chain is Lumenal. N-linked (GlcNAc...) asparagine glycosylation occurs at N583. Residues 656 to 676 (LWLSLFLHAGILHCLVSICFQ) form a helical membrane-spanning segment. The Cytoplasmic portion of the chain corresponds to 677–691 (MTVLRDLEKLAGWHR). Residues 692-712 (IAIIYLLSGVTGNLASAIFLP) form a helical membrane-spanning segment. Residues 713–714 (YR) lie on the Lumenal side of the membrane. A helical membrane pass occupies residues 715–735 (AEVGPAGSQFGILACLFVELF). The Cytoplasmic portion of the chain corresponds to 736 to 746 (QSWQILARPWR). The chain crosses the membrane as a helical span at residues 747–767 (AFFKLLAVVLFLFTFGLLPWI). Residues 768 to 772 (DNFAH) lie on the Lumenal side of the membrane. The helical transmembrane segment at 773–793 (ISGFISGLFLSFAFLPYISFG) threads the bilayer. The Cytoplasmic portion of the chain corresponds to 794–803 (KFDLYRKRCQ). The helical transmembrane segment at 804 to 824 (IIVFQVVFLGLLAGLVVLFYF) threads the bilayer. The Lumenal segment spans residues 825–855 (YPVRCEWCEFLTCIPFTDKFCEKYELDAQLH).

Belongs to the peptidase S54 family. In terms of assembly, homodimer, or homooligomer. Interacts with TGFA and HBEGF. Interacts with EGF; may retain EGF in the endoplasmic reticulum and regulates its degradation through the endoplasmic reticulum-associated degradation (ERAD). Interacts (via cytoplasmic N-terminus) with FRMD8/iTAP; this interaction leads to mutual protein stabilization. Interacts with ADAM17/TACE.

It localises to the endoplasmic reticulum membrane. It is found in the golgi apparatus membrane. In terms of biological role, regulates ADAM17 protease, a sheddase of the epidermal growth factor (EGF) receptor ligands and TNF, thereby plays a role in sleep, cell survival, proliferation, migration and inflammation. Does not exhibit any protease activity on its own. This is Inactive rhomboid protein 1 (RHBDF1) from Plecturocebus moloch (Dusky titi monkey).